Here is a 416-residue protein sequence, read N- to C-terminus: Transcription factor IIIB 50 kDa subunit (416 aa).

The TFIIB-type zinc finger occupies 3-36 (NGSRCPDCGSSELVEDSHYSQSQLVCSDCGCVVT). 4 residues coordinate Zn(2+): Cys-7, Cys-10, Cys-28, and Cys-31. 2 repeat units span residues 72 to 157 (DLRR…MQIV) and 173 to 249 (VKSY…SLAR). Residues 108–114 (AARLQKK) form an interaction with target DNA region. Residues 317–385 (AEVETKQQQP…TGDEDISDSE (69 aa)) are disordered. Ser-350 is subject to Phosphoserine. Residues 354–360 (LLPPCML) form a required for the formation of a ternary complex with DNA and TBP; not required for interaction with TBP in the absence of DNA region. At Cys-358 the chain carries Cysteine sulfenic acid (-SOH). Positions 362–416 (PPKRTHTMPPDSVVTGDEDISDSEIEQYLRTPQEVRDFERAQAASRAAMSVPNPP) are required for interaction with TBP and formation of a ternary complex with DNA and TBP.

It belongs to the TFIIB family. In terms of assembly, component of TFIIIB complexes. The TFIIIB complex has two activities, alpha and beta. The TFIIIB-alpha activity complex is composed of TBP, BDP1, and a complex containing both BRF2 and at least four stably associated proteins; this complex inhibits the transcription by pol III via its phosphorylation by CK2; YY1 facilitates the TFIIIB-alpha complex formation. Interacts with TBP; this interaction promotes recruitment of BRF2 to TATA box-containing promoters. Interacts with TBP and the BURE sequence (GC-rich sequence downstream from the TATA box) to form a strong ternary complex which is joined by BDP1; this ternary complex stimulates pol III transcription. Forms a trimeric complex composed of TBP, BRF2 and mini-SNAPc complex (SNAP43, SNAP50, and the N-terminal third of SNAP190) on the promoter. Assembly of the TBP-BRF2 complex is stimulated by SNAP190. Interacts with MAF1 and SNAPC4. In terms of processing, in response to oxidative stress, Cys-358 is reversibly oxidized to cysteine sulfenic acid. Oxidation of Cys-358 impairs formation of a ternary complex with TBP and DNA and down-regulates expression of target genes in response to oxidative stress.

It is found in the nucleus. Its function is as follows. General activator of RNA polymerase III transcription. Factor exclusively required for RNA polymerase III transcription of genes with promoter elements upstream of the initiation sites. Contributes to the regulation of gene expression; functions as activator in the absence of oxidative stress. Down-regulates expression of target genes in response to oxidative stress. Overexpression protects cells against apoptosis in response to oxidative stress. The polypeptide is Transcription factor IIIB 50 kDa subunit (Brf2) (Rattus norvegicus (Rat)).